The following is a 508-amino-acid chain: Ribose import ATP-binding protein RbsA 2 (508 aa).

ABC transporter domains lie at 6-241 (LTIH…VGRE) and 254-499 (ERSG…SGMG). 38–45 (GENGAGKS) provides a ligand contact to ATP.

This sequence belongs to the ABC transporter superfamily. Ribose importer (TC 3.A.1.2.1) family. The complex is composed of an ATP-binding protein (RbsA), two transmembrane proteins (RbsC) and a solute-binding protein (RbsB).

Its subcellular location is the cell inner membrane. The catalysed reaction is D-ribose(out) + ATP + H2O = D-ribose(in) + ADP + phosphate + H(+). Functionally, part of the ABC transporter complex RbsABC involved in ribose import. Responsible for energy coupling to the transport system. This chain is Ribose import ATP-binding protein RbsA 2, found in Rhizobium etli (strain ATCC 51251 / DSM 11541 / JCM 21823 / NBRC 15573 / CFN 42).